The sequence spans 506 residues: Cytochrome P450 6a8 (506 aa).

Cys451 lines the heme pocket.

The protein belongs to the cytochrome P450 family. Heme is required as a cofactor.

It is found in the endoplasmic reticulum membrane. The protein resides in the microsome membrane. Its function is as follows. Involved in the metabolism of insect hormones and in the breakdown of synthetic insecticides. This chain is Cytochrome P450 6a8 (Cyp6a8), found in Drosophila melanogaster (Fruit fly).